Reading from the N-terminus, the 279-residue chain is Octanoyl-[GcvH]:protein N-octanoyltransferase (279 aa).

One can recognise a BPL/LPL catalytic domain in the interval 48 to 253; the sequence is ETSPPVIRLW…TLEKLSDEIV (206 aa). Catalysis depends on C152, which acts as the Acyl-thioester intermediate.

The protein belongs to the octanoyltransferase LipL family.

It catalyses the reaction N(6)-octanoyl-L-lysyl-[glycine-cleavage complex H protein] + L-lysyl-[lipoyl-carrier protein] = N(6)-octanoyl-L-lysyl-[lipoyl-carrier protein] + L-lysyl-[glycine-cleavage complex H protein]. It functions in the pathway protein modification; protein lipoylation via endogenous pathway; protein N(6)-(lipoyl)lysine from octanoyl-[acyl-carrier-protein]. Functionally, catalyzes the amidotransfer (transamidation) of the octanoyl moiety from octanoyl-GcvH to the lipoyl domain of the E2 subunit of lipoate-dependent enzymes. This is Octanoyl-[GcvH]:protein N-octanoyltransferase from Oceanobacillus iheyensis (strain DSM 14371 / CIP 107618 / JCM 11309 / KCTC 3954 / HTE831).